Reading from the N-terminus, the 1028-residue chain is SWI/SNF-related matrix-associated actin-dependent regulator of chromatin subfamily A containing DEAD/H box 1 (1028 aa).

N-acetylmethionine is present on Met1. The tract at residues 13 to 81 (KRNKIEEAPE…PENDRKASIS (69 aa)) is disordered. A Phosphothreonine modification is found at Thr54. At Ser57 the chain carries Phosphoserine. Thr71 is modified (phosphothreonine). A Glycyl lysine isopeptide (Lys-Gly) (interchain with G-Cter in SUMO2) cross-link involves residue Lys77. Ser79 carries the phosphoserine modification. Lys84 is covalently cross-linked (Glycyl lysine isopeptide (Lys-Gly) (interchain with G-Cter in SUMO2)). A phosphoserine mark is found at Ser124, Ser127, Ser132, and Ser153. One can recognise a CUE 1 domain in the interval 158-200 (YSDNLSTVRQTRYSENLSSDLLKLIDSTSTMDGAIAAALLMFG). Disordered regions lie at residues 204–253 (GGGP…NWEK) and 303–348 (ASPS…KRKK). Phosphoserine is present on residues Ser213, Ser216, Ser241, and Ser244. Positions 253-296 (KQESIVLKLQKEFPNFDKEELREVLKEHEWMYTEALESLKVFAE) constitute a CUE 2 domain. A Phosphoserine modification is found at Ser304. Residues Lys337 and Lys473 each participate in a glycyl lysine isopeptide (Lys-Gly) (interchain with G-Cter in SUMO2) cross-link. A Helicase ATP-binding domain is found at 511 to 679 (ALVHKHGLNG…MSLLNFVMPH (169 aa)). 523 to 531 (ADEMGLGKT) is a binding site for ATP. Residues 630-633 (DEGH) carry the DEGH box motif. A Nuclear localization signal motif is present at residues 723 to 740 (RRVKEEVLKQLPPKKDRI). Residue Lys726 forms a Glycyl lysine isopeptide (Lys-Gly) (interchain with G-Cter in SUMO2) linkage. The Helicase C-terminal domain occupies 860–1012 (VLGCILSELK…MTTVDEGDEG (153 aa)). Residue 899-906 (YLRLDGKT) participates in ATP binding. Lys998 is covalently cross-linked (Glycyl lysine isopeptide (Lys-Gly) (interchain with G-Cter in SUMO2)). The DEAD box motif lies at 1007–1010 (DEGD).

It belongs to the SNF2/RAD54 helicase family. Binds to DNA preferentially in the vicinity of transcriptional start sites. Interacts with MSH2 and TRIM28. Part of a complex composed of TRIM28, HDAC1, HDAC2 and EHMT2. Interacts with PCNA.

The protein resides in the nucleus. The protein localises to the chromosome. The catalysed reaction is ATP + H2O = ADP + phosphate + H(+). In terms of biological role, DNA helicase that possesses intrinsic ATP-dependent nucleosome-remodeling activity and is both required for DNA repair and heterochromatin organization. Promotes DNA end resection of double-strand breaks (DSBs) following DNA damage: probably acts by weakening histone DNA interactions in nucleosomes flanking DSBs. Required for the restoration of heterochromatin organization after replication. Acts at replication sites to facilitate the maintenance of heterochromatin by directing H3 and H4 histones deacetylation, H3 'Lys-9' trimethylation (H3K9me3) and restoration of silencing. The polypeptide is SWI/SNF-related matrix-associated actin-dependent regulator of chromatin subfamily A containing DEAD/H box 1 (SMARCAD1) (Bos taurus (Bovine)).